Here is a 942-residue protein sequence, read N- to C-terminus: Zinc finger protein 865 (942 aa).

The interval 66–106 is disordered; that stretch reads FASTSTSKPKEFKVEAPPSSSLSPSKKPDIATTQQFNNQPP. Positions 96 to 106 are enriched in polar residues; the sequence is ATTQQFNNQPP. 20 consecutive C2H2-type zinc fingers follow at residues 172 to 194, 200 to 222, 282 to 304, 310 to 332, 338 to 360, 367 to 389, 466 to 488, 494 to 516, 522 to 544, 564 to 586, 592 to 614, 678 to 700, 706 to 728, 734 to 756, 762 to 784, 790 to 812, 818 to 840, 846 to 868, 874 to 896, and 902 to 924; these read FPCT…MLVH, YECN…RRCH, FTCT…QIIH, FSCS…VKTH, VQCE…QATH, YKCE…KQVH, FCCN…ERIH, HQCS…HVVH, YKCE…KQIH, FGCT…KELH, YVCD…KLVH, FSCS…KYVH, LACN…RRTH, FTCS…QRCH, YRCT…KVVH, YKCA…QRLH, QRCP…QRVH, YRCD…QRSH, LRCS…VQTH, and FKCG…RHAH.

It belongs to the krueppel C2H2-type zinc-finger protein family.

Its subcellular location is the nucleus. In terms of biological role, may be involved in transcriptional regulation. This chain is Zinc finger protein 865 (znf865), found in Xenopus tropicalis (Western clawed frog).